The chain runs to 176 residues: NAD(P)H-quinone oxidoreductase subunit J (176 aa).

Belongs to the complex I 30 kDa subunit family. As to quaternary structure, NDH-1 can be composed of about 15 different subunits; different subcomplexes with different compositions have been identified which probably have different functions.

Its subcellular location is the cellular thylakoid membrane. The enzyme catalyses a plastoquinone + NADH + (n+1) H(+)(in) = a plastoquinol + NAD(+) + n H(+)(out). It carries out the reaction a plastoquinone + NADPH + (n+1) H(+)(in) = a plastoquinol + NADP(+) + n H(+)(out). In terms of biological role, NDH-1 shuttles electrons from an unknown electron donor, via FMN and iron-sulfur (Fe-S) centers, to quinones in the respiratory and/or the photosynthetic chain. The immediate electron acceptor for the enzyme in this species is believed to be plastoquinone. Couples the redox reaction to proton translocation, and thus conserves the redox energy in a proton gradient. Cyanobacterial NDH-1 also plays a role in inorganic carbon-concentration. The chain is NAD(P)H-quinone oxidoreductase subunit J from Nostoc punctiforme (strain ATCC 29133 / PCC 73102).